The sequence spans 1312 residues: Angiotensin-converting enzyme (1312 aa).

A signal peptide spans 1–34 (MGAASGQRGRWPLSPPLLMLSLLVLLLQPSPAPA). Residues 35-1264 (LDPGLQPGNF…LEPQQARVGQ (1230 aa)) lie on the Extracellular side of the membrane. 2 Peptidase M2 domains span residues 45–629 (SPDE…LGWP) and 648–1227 (ETDE…LGWP). N-linked (GlcNAc...) asparagine glycosylation is found at asparagine 59, asparagine 79, asparagine 116, asparagine 151, and asparagine 165. Cysteine 162 and cysteine 170 are disulfide-bonded. Tyrosine 236 is a chloride binding site. Residue asparagine 323 is glycosylated (N-linked (GlcNAc...) asparagine). Residues cysteine 364 and cysteine 382 are joined by a disulfide bond. Residue histidine 395 participates in Zn(2+) binding. The Proton acceptor 1 role is filled by glutamate 396. Zn(2+)-binding residues include histidine 399 and glutamate 423. Asparagine 514 carries N-linked (GlcNAc...) asparagine glycosylation. Histidine 525 functions as the Proton donor 1 in the catalytic mechanism. Arginine 534 serves as a coordination point for chloride. Cysteine 550 and cysteine 562 are joined by a disulfide. N-linked (GlcNAc...) asparagine glycosylation is present at asparagine 682. N-linked (GlcNAc...) (complex) asparagine glycosylation is found at asparagine 700 and asparagine 719. A disulfide bond links cysteine 762 and cysteine 768. Residue asparagine 765 is glycosylated (N-linked (GlcNAc...) asparagine). Chloride-binding residues include arginine 796 and tyrosine 834. An N-linked (GlcNAc...) asparagine glycan is attached at asparagine 947. A disulfide bridge connects residues cysteine 962 and cysteine 980. A Zn(2+)-binding site is contributed by histidine 993. Glutamate 994 (proton acceptor 2) is an active-site residue. Positions 997 and 1021 each coordinate Zn(2+). 2 residues coordinate chloride: tryptophan 1095 and arginine 1099. The Proton donor 2 role is filled by histidine 1123. A chloride-binding site is contributed by arginine 1132. An intrachain disulfide couples cysteine 1148 to cysteine 1160. Asparagine 1196 is a glycosylation site (N-linked (GlcNAc...) asparagine). A juxtamembrane stalk region spans residues 1220 to 1261 (HGETLGWPEYNWAPNTARAEGSTAESNRVNFLGLYLEPQQAR). Residues 1265–1281 (WVLLFLGVALLVATVGL) traverse the membrane as a helical segment. Over 1282–1312 (AHRLYNIRNHHSLRRPHRGPQFGSEVELRHS) the chain is Cytoplasmic. Position 1305 is a phosphoserine (serine 1305).

Belongs to the peptidase M2 family. Monomer and homodimer; homodimerizes following binding to an inhibitor. Interacts with calmodulin (CALM1, CALM2 or CALM3); interaction takes place in the cytoplasmic region and regulates phosphorylation and proteolytic cleavage. The cofactor is Zn(2+). Chloride serves as cofactor. Produced following proteolytic cleavage by secretase enzymes that cleave the transmembrane form in the juxtamembrane stalk region upstream of the transmembrane region. Cleavage can take place at different sites of the juxtamembrane stalk region. Post-translationally, phosphorylated by CK2 on Ser-1305; which allows membrane retention. Phosphorylated on tyrosine residues on its extracellular part, promoting cleavage by secretase enzymes and formation of the soluble form (Angiotensin-converting enzyme, soluble form). As to expression, highly expressed in kidney and lung; not expressed in the liver. In the brain, expressed in the cerebral cortex, hippocampus, cerebellum and basal ganglia/brainstem. Highly expressed in dopamine receptor DRD1-expressing neurons in the dorsal striatum and the nucleus accumbens of the brain. In terms of tissue distribution, specifically expressed in spermatocytes, adult testis.

It is found in the cell membrane. The protein localises to the cytoplasm. The protein resides in the secreted. The enzyme catalyses Release of a C-terminal dipeptide, oligopeptide-|-Xaa-Yaa, when Xaa is not Pro, and Yaa is neither Asp nor Glu. Thus, conversion of angiotensin I to angiotensin II, with increase in vasoconstrictor activity, but no action on angiotensin II.. It catalyses the reaction angiotensin I + H2O = L-histidyl-L-leucine + angiotensin II. The catalysed reaction is bradykinin + H2O = L-Phe-L-Arg + bradykinin(1-7). It carries out the reaction substance P + H2O = substance P(1-9) + L-Leu-L-Met-NH2. The enzyme catalyses substance P + H2O = substance P(1-8) + Gly-L-Leu-L-Met-NH2. It catalyses the reaction substance P + H2O = L-Phe-L-Phe-Gly-L-Leu-L-Met-NH2 + substance P(1-6). The catalysed reaction is neurotensin + H2O = neurotensin(1-11) + L-isoleucyl-L-leucine. It carries out the reaction goralatide + H2O = N-acetyl-L-seryl-L-aspartate + L-lysyl-L-proline. The enzyme catalyses Met-enkephalin + H2O = L-phenylalanyl-L-methionine + L-tyrosylglycylglycine. It catalyses the reaction Leu-enkephalin + H2O = L-tyrosylglycylglycine + L-phenylalanyl-L-leucine. The catalysed reaction is Met-enkephalin-Arg-Phe + H2O = L-arginyl-L-phenylalanine + Met-enkephalin. The dipeptidyl carboxypeptidase activity is specifically inhibited by lisinopril, captopril and enalaprilat. The N-terminal catalytic domain, but not the C-terminal catalytic domain, is specifically inhibited by the phosphinic peptide RXP 407. Its activity is regulated as follows. The putative GPIase activity is nearly insensitive to captopril. In terms of biological role, dipeptidyl carboxypeptidase that removes dipeptides from the C-terminus of a variety of circulating hormones, such as angiotensin I, bradykinin or enkephalins, thereby playing a key role in the regulation of blood pressure, electrolyte homeostasis or synaptic plasticity. Composed of two similar catalytic domains, each possessing a functional active site, with different selectivity for substrates. Plays a major role in the angiotensin-renin system that regulates blood pressure and sodium retention by the kidney by converting angiotensin I to angiotensin II, resulting in an increase of the vasoconstrictor activity of angiotensin. Also able to inactivate bradykinin, a potent vasodilator, and therefore enhance the blood pressure response. Acts as a regulator of synaptic transmission by mediating cleavage of neuropeptide hormones, such as substance P, neurotensin or enkephalins. Catalyzes degradation of different enkephalin neuropeptides (Met-enkephalin, Leu-enkephalin, Met-enkephalin-Arg-Phe and possibly Met-enkephalin-Arg-Gly-Leu). Acts as a regulator of synaptic plasticity in the nucleus accumbens of the brain by mediating cleavage of Met-enkephalin-Arg-Phe, a strong ligand of Mu-type opioid receptor OPRM1, into Met-enkephalin. Met-enkephalin-Arg-Phe cleavage by ACE decreases activation of OPRM1, leading to long-term synaptic potentiation of glutamate release. Also acts as a regulator of hematopoietic stem cell differentiation by mediating degradation of hemoregulatory peptide N-acetyl-SDKP (AcSDKP). Acts as a regulator of cannabinoid signaling pathway by mediating degradation of hemopressin, an antagonist peptide of the cannabinoid receptor CNR1. Involved in amyloid-beta metabolism by catalyzing degradation of Amyloid-beta protein 40 and Amyloid-beta protein 42 peptides, thereby preventing plaque formation. Catalyzes cleavage of cholecystokinin (maturation of Cholecystokinin-8 and Cholecystokinin-5) and Gonadoliberin-1 (both maturation and degradation) hormones. Degradation of hemoregulatory peptide N-acetyl-SDKP (AcSDKP) and amyloid-beta proteins is mediated by the N-terminal catalytic domain, while angiotensin I and cholecystokinin cleavage is mediated by the C-terminal catalytic region. Functionally, soluble form that is released in blood plasma and other body fluids following proteolytic cleavage in the juxtamembrane stalk region. Isoform produced by alternative promoter usage that is specifically expressed in spermatocytes and adult testis, and which is required for male fertility. In contrast to somatic isoforms, only contains one catalytic domain. Acts as a dipeptidyl carboxypeptidase that removes dipeptides from the C-terminus of substrates. The identity of substrates that are needed for male fertility is unknown. Isoform Testis-specific and isoform Somatic have distinct activities and cannot completely compensate for the loss of the other when expressed in somatic tissues or testis. May also have a glycosidase activity which releases GPI-anchored proteins from the membrane by cleaving the mannose linkage in the GPI moiety. The GPIase activity was reported to be essential for the egg-binding ability of the sperm. This activity is however unclear and has been challenged by other groups, suggesting that it may be indirect. In Mus musculus (Mouse), this protein is Angiotensin-converting enzyme.